The chain runs to 243 residues: Ubiquinone/menaquinone biosynthesis C-methyltransferase UbiE (243 aa).

S-adenosyl-L-methionine is bound by residues threonine 69, aspartate 90, and 116–117 (DA).

This sequence belongs to the class I-like SAM-binding methyltransferase superfamily. MenG/UbiE family.

It catalyses the reaction a 2-demethylmenaquinol + S-adenosyl-L-methionine = a menaquinol + S-adenosyl-L-homocysteine + H(+). The enzyme catalyses a 2-methoxy-6-(all-trans-polyprenyl)benzene-1,4-diol + S-adenosyl-L-methionine = a 5-methoxy-2-methyl-3-(all-trans-polyprenyl)benzene-1,4-diol + S-adenosyl-L-homocysteine + H(+). It functions in the pathway quinol/quinone metabolism; menaquinone biosynthesis; menaquinol from 1,4-dihydroxy-2-naphthoate: step 2/2. It participates in cofactor biosynthesis; ubiquinone biosynthesis. Functionally, methyltransferase required for the conversion of demethylmenaquinol (DMKH2) to menaquinol (MKH2) and the conversion of 2-polyprenyl-6-methoxy-1,4-benzoquinol (DDMQH2) to 2-polyprenyl-3-methyl-6-methoxy-1,4-benzoquinol (DMQH2). This Ralstonia pickettii (strain 12J) protein is Ubiquinone/menaquinone biosynthesis C-methyltransferase UbiE.